We begin with the raw amino-acid sequence, 270 residues long: Protein-ADP-ribose hydrolase (270 aa).

Residues 73–267 (VSVKDCQKTN…LYDTYLQKEN (195 aa)) form the Macro domain. Residues Asp-92, Ile-93, and Asn-106 each contribute to the ADP-D-ribose site. Residues Cys-112, His-117, and Cys-119 each contribute to the Zn(2+) site. 8 residues coordinate ADP-D-ribose: Cys-119, Ile-120, Asp-121, Ser-212, Thr-213, Gly-214, Glu-215, and Phe-216.

The protein belongs to the MacroD-type family. Zn-Macro subfamily. Requires Zn(2+) as cofactor.

It carries out the reaction 4-O-(ADP-D-ribosyl)-L-aspartyl-[protein] + H2O = L-aspartyl-[protein] + ADP-D-ribose + H(+). In terms of biological role, ADP-ribosylhydrolase that specifically reverses the SirTM-mediated mono-ADP-ribosylation at an asparatate residue of GcvH-L, by releasing ADP-ribose from the target protein. May play a role in the regulation of the response to host-induced oxidative stress. This chain is Protein-ADP-ribose hydrolase, found in Streptococcus pyogenes serotype M3 (strain ATCC BAA-595 / MGAS315).